Consider the following 183-residue polypeptide: Translation initiation factor IF-3 (183 aa).

Belongs to the IF-3 family. As to quaternary structure, monomer.

The protein resides in the cytoplasm. In terms of biological role, IF-3 binds to the 30S ribosomal subunit and shifts the equilibrium between 70S ribosomes and their 50S and 30S subunits in favor of the free subunits, thus enhancing the availability of 30S subunits on which protein synthesis initiation begins. The chain is Translation initiation factor IF-3 from Azobacteroides pseudotrichonymphae genomovar. CFP2.